Reading from the N-terminus, the 423-residue chain is Isovaleryl-CoA dehydrogenase, mitochondrial (423 aa).

The transit peptide at 1–29 (MATATRLLGWRVASWRMRPPPAGFVSQRA) directs the protein to the mitochondrion. N6-acetyllysine; alternate is present on residues Lys-55, Lys-64, and Lys-75. Lys-55, Lys-64, and Lys-75 each carry N6-succinyllysine; alternate. FAD-binding positions include 162–171 (LAMSEPNAGS) and 195–197 (WIT). Ser-171 is a substrate binding site. A substrate-binding site is contributed by 219 to 220 (SR). N6-acetyllysine is present on Lys-238. An N6-acetyllysine; alternate modification is found at Lys-259. Residue Lys-259 is modified to N6-succinyllysine; alternate. Residues Tyr-274 and 281–284 (DLER) contribute to the substrate site. Catalysis depends on Glu-283, which acts as the Proton acceptor. Arg-309 contributes to the FAD binding site. Lys-315 bears the N6-succinyllysine mark. FAD is bound by residues Gln-320 and 377–381 (QCFGG). 404–405 (AG) lines the substrate pocket. 406-408 (TSE) is an FAD binding site.

It belongs to the acyl-CoA dehydrogenase family. In terms of assembly, homotetramer. The cofactor is FAD.

The protein resides in the mitochondrion matrix. It carries out the reaction 3-methylbutanoyl-CoA + oxidized [electron-transfer flavoprotein] + H(+) = 3-methylbut-2-enoyl-CoA + reduced [electron-transfer flavoprotein]. It catalyses the reaction pentanoyl-CoA + oxidized [electron-transfer flavoprotein] + H(+) = (2E)-pentenoyl-CoA + reduced [electron-transfer flavoprotein]. The enzyme catalyses hexanoyl-CoA + oxidized [electron-transfer flavoprotein] + H(+) = (2E)-hexenoyl-CoA + reduced [electron-transfer flavoprotein]. The catalysed reaction is butanoyl-CoA + oxidized [electron-transfer flavoprotein] + H(+) = (2E)-butenoyl-CoA + reduced [electron-transfer flavoprotein]. It participates in amino-acid degradation; L-leucine degradation; (S)-3-hydroxy-3-methylglutaryl-CoA from 3-isovaleryl-CoA: step 1/3. Its function is as follows. Catalyzes the conversion of isovaleryl-CoA/3-methylbutanoyl-CoA to 3-methylbut-2-enoyl-CoA as an intermediate step in the leucine (Leu) catabolic pathway. To a lesser extent, is also able to catalyze the oxidation of other saturated short-chain acyl-CoA thioesters as pentanoyl-CoA, hexenoyl-CoA and butenoyl-CoA. This Pongo abelii (Sumatran orangutan) protein is Isovaleryl-CoA dehydrogenase, mitochondrial (IVD).